We begin with the raw amino-acid sequence, 2690 residues long: Non-reducing polyketide synthase pigA (2690 aa).

In terms of domain architecture, Starter acyltransferase (SAT) spans 96-211 (NILLSPLVVI…AELSRVLQDF (116 aa)). Cysteine 140 functions as the Nucleophile; for transacylase activity in the catalytic mechanism. Histidine 258 (proton donor/acceptor; for transacylase activity) is an active-site residue. In terms of domain architecture, Ketosynthase family 3 (KS3) spans 388–804 (ENDIAVIGMS…GSNASLIVTQ (417 aa)). Active-site for beta-ketoacyl synthase activity residues include cysteine 553, histidine 688, and histidine 727. One can recognise a Malonyl-CoA:ACP transacylase (MAT) domain in the interval 915–1182 (FGGQISTFVG…VQRLAKQHPS (268 aa)). The tract at residues 1296-1426 (LTFVGYQDKD…GKVFFRSVDD (131 aa)) is N-terminal hotdog fold. Positions 1296–1602 (LTFVGYQDKD…YAKVPKMSMS (307 aa)) constitute a PKS/mFAS DH domain. The tract at residues 1323-1600 (LVSGHLIAQT…INYAKVPKMS (278 aa)) is product template (PT) domain. Histidine 1327 functions as the Proton acceptor; for dehydratase activity in the catalytic mechanism. The segment at 1454 to 1602 (ADDIIQGRNI…YAKVPKMSMS (149 aa)) is C-terminal hotdog fold. Residue aspartate 1510 is the Proton donor; for dehydratase activity of the active site. The Carrier 1 domain occupies 1657–1731 (PDISGKVRAM…GLLRCIQEAL (75 aa)). Residue serine 1691 is modified to O-(pantetheine 4'-phosphoryl)serine. The segment at 1731–1764 (LGPSEGVEEETDNEEGEDGESSENPSVFTPSDAA) is disordered. Residues 1736–1751 (GVEEETDNEEGEDGES) show a composition bias toward acidic residues. The span at 1755–1764 (PSVFTPSDAA) shows a compositional bias: polar residues. Residues 1768 to 1842 (SSAKADVAEF…EFDVKVNGKS (75 aa)) enclose the Carrier 2 domain. The residue at position 1802 (serine 1802) is an O-(pantetheine 4'-phosphoryl)serine. A methyltransferase domain region spans residues 1948–2255 (QTLERIKYLP…EVNIQRIFLA (308 aa)). The Thioester reductase (TE) domain occupies 2320 to 2564 (VTGATGSLGS…LSWTPVNDVA (245 aa)).

The cofactor is pantetheine 4'-phosphate.

The protein operates within secondary metabolite biosynthesis. In terms of biological role, non-reducing polyketide synthase; part of the gene cluster that mediates the biosynthesis of azaphilone pigments (MonAzPs), a complex mixture of compounds with a common azaphilone skeleton very widely used as food colorants. PigA catalyzes the first step of MonAzPs biosynthesis and forms the hexaketide precursor from successive condensations of five malonyl-CoA units, with a simple acetyl-CoA starter unit. The starter acyl transferase (SAT) domain of pigA selects an acetyl-CoA starter unit, and the ketoacyl synthase (KS)-acyl transferase (AT)-acyl carrier protein (ACP) domains extend this starter unit five times with malonyl-CoA in five successive decarboxylative Claisen condensation cycles. The methyltransferase (MT) domain conducts a single C-methylation at C-4, most likely at the pentaketide stage. The reactive hexaketide chain then undergoes a product template (PT) domain-mediated C-2 to C-7 aldol cyclization to afford the first aromatic ring, followed by reductive release of the first pathway intermediate by the NADPH-dependent reductive release (R) domain. The role of esterase pigG is not clear, but it may play at most a supplementary role in the formation of the benzaldehyde produced by the pigA nrPKS. This very reactive benzaldehyde is intercepted by the pigC ketoreductase that to provide the first stable enzyme-free MonAzPs intermediate, 6-(4-hydroxy-2-oxopentyl)-3-methyl-2,4-dioxocyclohexane carbaldehyde, also known as M7PKS-1. The FAD-dependent monooxygenase pigN hydroxylates M7PKS-1 at C-4, which triggers the formation of the pyran ring. PigJ, pigK and pigD are involved in the acetylation of the pyran ring. PigJ and pigK form the two subunits of a dedicated fungal FAS that produces the side chain fatty acyl moiety of MonAzPs and pigD transfers the fatty acyl chain to the C-4 alcohol. PigM and pigO are involved in the elimination of the omega-1 alcohol. PigM acts as an O-acetyltransferase that synthesizes the putative O-11 acetyl intermediate whereas pigO eliminates acetic acid to yield an intermediate with a C10(11) double bond. The dehydration of the C-11 alcohol followed by the reduction of the C6(7) double bond by the NAD(P)H-dependent oxidoreductase pigE increases the electrophilicity of the C-5 ketone of the resulting acyl benzopyran. This in turn sets up the C-5 ketone for an intramolecular Knoevenagel aldol condensation with the C-20 enol of the side chain. This condensation affords the characteristic linear tricyclic carbon skeletons of the yellow pigments that serve as the common precursors for the classical yellow pigments monascin and ankaflavin, orange pigments rubopunctatin and monascorubrin, and red pigments ribropunctamine and monascorubramine. The FAD-dependent oxidoreductase pigF is especially invoved in the biosynthesis of orange and red pigments via desaturation of C6(7). The protein is Non-reducing polyketide synthase pigA of Monascus ruber (Mold).